A 110-amino-acid polypeptide reads, in one-letter code: Small ribosomal subunit protein bS18c (110 aa).

It belongs to the bacterial ribosomal protein bS18 family. As to quaternary structure, part of the 30S ribosomal subunit.

Its subcellular location is the plastid. The protein localises to the chloroplast. This Pisum sativum (Garden pea) protein is Small ribosomal subunit protein bS18c (rps18).